The following is a 339-amino-acid chain: Ferrochelatase (339 aa).

Positions 202 and 283 each coordinate Fe cation.

Belongs to the ferrochelatase family.

It localises to the cytoplasm. The catalysed reaction is heme b + 2 H(+) = protoporphyrin IX + Fe(2+). It participates in porphyrin-containing compound metabolism; protoheme biosynthesis; protoheme from protoporphyrin-IX: step 1/1. In terms of biological role, catalyzes the ferrous insertion into protoporphyrin IX. In Psychrobacter sp. (strain PRwf-1), this protein is Ferrochelatase.